Consider the following 375-residue polypeptide: Thiamine-phosphate synthase (375 aa).

A unknown region spans residues 1 to 127 (MTNAESRTVL…AACIESIRYQ (127 aa)). Positions 128 to 375 (CYATFRELEL…SSDVCPLPND (248 aa)) are thiamine-phosphate synthase. 4-amino-2-methyl-5-(diphosphooxymethyl)pyrimidine-binding positions include 183-185 (QLR) and Asn-215. Mg(2+) is bound by residues Asp-216 and Glu-235. 4-amino-2-methyl-5-(diphosphooxymethyl)pyrimidine is bound by residues Ser-254 and Lys-283. Gly-315 contributes to the 2-[(2R,5Z)-2-carboxy-4-methylthiazol-5(2H)-ylidene]ethyl phosphate binding site.

This sequence belongs to the thiamine-phosphate synthase family. Mg(2+) is required as a cofactor.

It carries out the reaction 2-[(2R,5Z)-2-carboxy-4-methylthiazol-5(2H)-ylidene]ethyl phosphate + 4-amino-2-methyl-5-(diphosphooxymethyl)pyrimidine + 2 H(+) = thiamine phosphate + CO2 + diphosphate. The catalysed reaction is 2-(2-carboxy-4-methylthiazol-5-yl)ethyl phosphate + 4-amino-2-methyl-5-(diphosphooxymethyl)pyrimidine + 2 H(+) = thiamine phosphate + CO2 + diphosphate. The enzyme catalyses 4-methyl-5-(2-phosphooxyethyl)-thiazole + 4-amino-2-methyl-5-(diphosphooxymethyl)pyrimidine + H(+) = thiamine phosphate + diphosphate. Its pathway is cofactor biosynthesis; thiamine diphosphate biosynthesis; thiamine phosphate from 4-amino-2-methyl-5-diphosphomethylpyrimidine and 4-methyl-5-(2-phosphoethyl)-thiazole: step 1/1. Condenses 4-methyl-5-(beta-hydroxyethyl)thiazole monophosphate (THZ-P) and 2-methyl-4-amino-5-hydroxymethyl pyrimidine pyrophosphate (HMP-PP) to form thiamine monophosphate (TMP). In Rhodopirellula baltica (strain DSM 10527 / NCIMB 13988 / SH1), this protein is Thiamine-phosphate synthase (thiE).